Consider the following 425-residue polypeptide: Probable proline--tRNA ligase, mitochondrial (425 aa).

The protein belongs to the class-II aminoacyl-tRNA synthetase family.

It is found in the mitochondrion. It catalyses the reaction tRNA(Pro) + L-proline + ATP = L-prolyl-tRNA(Pro) + AMP + diphosphate. The protein is Probable proline--tRNA ligase, mitochondrial of Schizosaccharomyces pombe (strain 972 / ATCC 24843) (Fission yeast).